Here is a 453-residue protein sequence, read N- to C-terminus: Ribosomal protein uS12 methylthiotransferase RimO (453 aa).

One can recognise an MTTase N-terminal domain in the interval 4 to 120; sequence TSVHIVSLGC…IADHLRVLME (117 aa). [4Fe-4S] cluster is bound by residues Cys13, Cys49, Cys83, Cys161, Cys165, and Cys168. The 231-residue stretch at 147-377 folds into the Radical SAM core domain; that stretch reads STPPYSAYLK…MEEQAVISHE (231 aa). Residues 380 to 450 enclose the TRAM domain; it reads QTLVGSLQEV…DYDLFAEVIS (71 aa).

Belongs to the methylthiotransferase family. RimO subfamily. [4Fe-4S] cluster is required as a cofactor.

The protein resides in the cytoplasm. The catalysed reaction is L-aspartate(89)-[ribosomal protein uS12]-hydrogen + (sulfur carrier)-SH + AH2 + 2 S-adenosyl-L-methionine = 3-methylsulfanyl-L-aspartate(89)-[ribosomal protein uS12]-hydrogen + (sulfur carrier)-H + 5'-deoxyadenosine + L-methionine + A + S-adenosyl-L-homocysteine + 2 H(+). Functionally, catalyzes the methylthiolation of an aspartic acid residue of ribosomal protein uS12. This is Ribosomal protein uS12 methylthiotransferase RimO from Syntrophus aciditrophicus (strain SB).